A 130-amino-acid chain; its full sequence is Small ribosomal subunit protein uS11 (130 aa).

A compositionally biased stretch (basic residues) spans Met1–Arg15. The interval Met1–Val21 is disordered.

This sequence belongs to the universal ribosomal protein uS11 family. In terms of assembly, part of the 30S ribosomal subunit. Interacts with proteins S7 and S18. Binds to IF-3.

Located on the platform of the 30S subunit, it bridges several disparate RNA helices of the 16S rRNA. Forms part of the Shine-Dalgarno cleft in the 70S ribosome. The polypeptide is Small ribosomal subunit protein uS11 (Synechococcus elongatus (strain ATCC 33912 / PCC 7942 / FACHB-805) (Anacystis nidulans R2)).